The sequence spans 238 residues: Ribosomal RNA small subunit methyltransferase G (238 aa).

S-adenosyl-L-methionine contacts are provided by residues G77, F82, 128-129, and R147; that span reads AE.

The protein belongs to the methyltransferase superfamily. RNA methyltransferase RsmG family.

Its subcellular location is the cytoplasm. In terms of biological role, specifically methylates the N7 position of guanine in position 535 of 16S rRNA. This Brevibacillus brevis (strain 47 / JCM 6285 / NBRC 100599) protein is Ribosomal RNA small subunit methyltransferase G.